The primary structure comprises 172 residues: Ribosome maturation factor RimM (172 aa).

The PRC barrel domain occupies 96–168 (DGEFYYHEII…RVDVEILEGL (73 aa)).

Belongs to the RimM family. In terms of assembly, binds ribosomal protein uS19.

It is found in the cytoplasm. Its function is as follows. An accessory protein needed during the final step in the assembly of 30S ribosomal subunit, possibly for assembly of the head region. Essential for efficient processing of 16S rRNA. May be needed both before and after RbfA during the maturation of 16S rRNA. It has affinity for free ribosomal 30S subunits but not for 70S ribosomes. This is Ribosome maturation factor RimM from Streptococcus pneumoniae serotype 4 (strain ATCC BAA-334 / TIGR4).